The sequence spans 952 residues: Meiotic coiled-coil protein 3 (952 aa).

Coiled-coil stretches lie at residues 283 to 611 (QLLQ…KEHL), 684 to 716 (TKKFVQKDQEYQTKEIELRNYKITLQSLLEDKL), and 839 to 942 (SLEN…RERE).

The protein localises to the cytoplasm. Its function is as follows. Has a role in meiosis. The protein is Meiotic coiled-coil protein 3 (mcp3) of Schizosaccharomyces pombe (strain 972 / ATCC 24843) (Fission yeast).